A 430-amino-acid chain; its full sequence is MIDPNLLRNNLAEVAATLKLKRNFILDTKELAELEEQRKALQVETETLQAKRNARSKAVGAAKARGENIAPLLAEMDDMGHELATVKAELDEILAELNTIALTIPNLPADEVPLGKDDSENKEISRWGTPRQFDFEIKDHVTLGENLAGGIDFAAGAKLSGARFAVMKGQVAKMHRALAQFMLDLHTEQHGYTETYVPYLVNHTTLYGTGQLPKFGEDLFHTTPLEGEVPYALIPTAEVPVTNLVRDEILNTEDLPIRMTAHTPCFRSEAGSYGRDTRGLIRMHQFDKVEMVQIVDPDKSMEALEELTAHAEKVLQLLGLPYRKMLLCTGDMGFGSCKTYDLEVWVPAQDTYREISSCSNMWDFQARRMQARCRSKTDKKTRLVHTLNGSGLAVGRTLVAVLENYQNEDGSVTVPEVLRPYMGGLEVIGK.

Position 236 to 238 (236 to 238 (TAE)) interacts with L-serine. 267-269 (RSE) lines the ATP pocket. Glu-290 serves as a coordination point for L-serine. An ATP-binding site is contributed by 354–357 (EISS). Residue Ser-390 coordinates L-serine.

The protein belongs to the class-II aminoacyl-tRNA synthetase family. Type-1 seryl-tRNA synthetase subfamily. In terms of assembly, homodimer. The tRNA molecule binds across the dimer.

The protein localises to the cytoplasm. The catalysed reaction is tRNA(Ser) + L-serine + ATP = L-seryl-tRNA(Ser) + AMP + diphosphate + H(+). It catalyses the reaction tRNA(Sec) + L-serine + ATP = L-seryl-tRNA(Sec) + AMP + diphosphate + H(+). Its pathway is aminoacyl-tRNA biosynthesis; selenocysteinyl-tRNA(Sec) biosynthesis; L-seryl-tRNA(Sec) from L-serine and tRNA(Sec): step 1/1. Functionally, catalyzes the attachment of serine to tRNA(Ser). Is also able to aminoacylate tRNA(Sec) with serine, to form the misacylated tRNA L-seryl-tRNA(Sec), which will be further converted into selenocysteinyl-tRNA(Sec). The chain is Serine--tRNA ligase from Mannheimia succiniciproducens (strain KCTC 0769BP / MBEL55E).